We begin with the raw amino-acid sequence, 158 residues long: Putative cTAGE family member 3 (158 aa).

Residues 26–96 are a coiled coil; sequence QLQESQKQLL…AAVLEEDITD (71 aa).

It belongs to the cTAGE family. As to expression, expressed in normal tissues including colon, mammary gland, ovary, placenta, stomach and testis, as well as several fetal tissues.

Tumor-associated antigen. In Homo sapiens (Human), this protein is Putative cTAGE family member 3 (CTAGE3P).